The following is a 125-amino-acid chain: Gem-associated protein 7 (125 aa).

Met-1 is modified (N-acetylmethionine). Residues 1-29 (MQTPLATPVPVLRLPRGPDGSNRGFAPDG) form the SUZ-C domain. A disordered region spans residues 1–52 (MQTPLATPVPVLRLPRGPDGSNRGFAPDGRRAPPKPEVPEPPESRESWEQQA). The residue at position 3 (Thr-3) is a Phosphothreonine. A Sm domain is found at 59–125 (RYLRSLLAMV…SDIISYTFKP (67 aa)).

Belongs to the gemin-7 family. As to quaternary structure, part of the core SMN complex that contains SMN1, GEMIN2/SIP1, DDX20/GEMIN3, GEMIN4, GEMIN5, GEMIN6, GEMIN7, GEMIN8 and STRAP/UNRIP. Part of the SMN-Sm complex that contains SMN1, GEMIN2/SIP1, DDX20/GEMIN3, GEMIN4, GEMIN5, GEMIN6, GEMIN7, GEMIN8, STRAP/UNRIP and the Sm proteins SNRPB, SNRPD1, SNRPD2, SNRPD3, SNRPE, SNRPF and SNRPG. Interacts with GEMIN6; the interaction is direct. Interacts with STRAP/UNRIP; the interaction is direct. Interacts with GEMIN8; the interaction is direct. Interacts with SNRPB, SNRPD2, SNRPD3 and SNRPE; the interaction is direct.

The protein localises to the nucleus. Its subcellular location is the nucleoplasm. It localises to the gem. The protein resides in the cytoplasm. In terms of biological role, the SMN complex catalyzes the assembly of small nuclear ribonucleoproteins (snRNPs), the building blocks of the spliceosome, and thereby plays an important role in the splicing of cellular pre-mRNAs. Most spliceosomal snRNPs contain a common set of Sm proteins SNRPB, SNRPD1, SNRPD2, SNRPD3, SNRPE, SNRPF and SNRPG that assemble in a heptameric protein ring on the Sm site of the small nuclear RNA to form the core snRNP (Sm core). In the cytosol, the Sm proteins SNRPD1, SNRPD2, SNRPE, SNRPF and SNRPG are trapped in an inactive 6S pICln-Sm complex by the chaperone CLNS1A that controls the assembly of the core snRNP. To assemble core snRNPs, the SMN complex accepts the trapped 5Sm proteins from CLNS1A forming an intermediate. Binding of snRNA inside 5Sm triggers eviction of the SMN complex, thereby allowing binding of SNRPD3 and SNRPB to complete assembly of the core snRNP. This chain is Gem-associated protein 7 (GEMIN7), found in Bos taurus (Bovine).